The sequence spans 260 residues: Acyl-[acyl-carrier-protein]--UDP-N-acetylglucosamine O-acyltransferase (260 aa).

It belongs to the transferase hexapeptide repeat family. LpxA subfamily. As to quaternary structure, homotrimer.

It localises to the cytoplasm. The enzyme catalyses a (3R)-hydroxyacyl-[ACP] + UDP-N-acetyl-alpha-D-glucosamine = a UDP-3-O-[(3R)-3-hydroxyacyl]-N-acetyl-alpha-D-glucosamine + holo-[ACP]. It functions in the pathway glycolipid biosynthesis; lipid IV(A) biosynthesis; lipid IV(A) from (3R)-3-hydroxytetradecanoyl-[acyl-carrier-protein] and UDP-N-acetyl-alpha-D-glucosamine: step 1/6. Involved in the biosynthesis of lipid A, a phosphorylated glycolipid that anchors the lipopolysaccharide to the outer membrane of the cell. The sequence is that of Acyl-[acyl-carrier-protein]--UDP-N-acetylglucosamine O-acyltransferase from Sulfurovum sp. (strain NBC37-1).